Here is a 410-residue protein sequence, read N- to C-terminus: Multifunctional CCA protein (410 aa).

ATP is bound by residues Gly8 and Arg11. CTP contacts are provided by Gly8 and Arg11. Residues Asp21 and Asp23 each coordinate Mg(2+). The ATP site is built by Arg91, Arg138, and Arg141. The CTP site is built by Arg91, Arg138, and Arg141. Residues 229-347 (TGIHQEMVSD…AQLALVCEAD (119 aa)) form the HD domain.

Belongs to the tRNA nucleotidyltransferase/poly(A) polymerase family. Bacterial CCA-adding enzyme type 1 subfamily. As to quaternary structure, monomer. Can also form homodimers and oligomers. It depends on Mg(2+) as a cofactor. Requires Ni(2+) as cofactor.

It carries out the reaction a tRNA precursor + 2 CTP + ATP = a tRNA with a 3' CCA end + 3 diphosphate. It catalyses the reaction a tRNA with a 3' CCA end + 2 CTP + ATP = a tRNA with a 3' CCACCA end + 3 diphosphate. Its function is as follows. Catalyzes the addition and repair of the essential 3'-terminal CCA sequence in tRNAs without using a nucleic acid template. Adds these three nucleotides in the order of C, C, and A to the tRNA nucleotide-73, using CTP and ATP as substrates and producing inorganic pyrophosphate. tRNA 3'-terminal CCA addition is required both for tRNA processing and repair. Also involved in tRNA surveillance by mediating tandem CCA addition to generate a CCACCA at the 3' terminus of unstable tRNAs. While stable tRNAs receive only 3'-terminal CCA, unstable tRNAs are marked with CCACCA and rapidly degraded. The polypeptide is Multifunctional CCA protein (Xanthomonas euvesicatoria pv. vesicatoria (strain 85-10) (Xanthomonas campestris pv. vesicatoria)).